The sequence spans 249 residues: 2,3-bisphosphoglycerate-dependent phosphoglycerate mutase (249 aa).

Substrate-binding positions include arginine 9 to asparagine 16, threonine 22 to glycine 23, arginine 61, glutamate 88 to tyrosine 91, lysine 99, arginine 115 to arginine 116, and glycine 184 to asparagine 185. Histidine 10 functions as the Tele-phosphohistidine intermediate in the catalytic mechanism. The active-site Proton donor/acceptor is glutamate 88.

It belongs to the phosphoglycerate mutase family. BPG-dependent PGAM subfamily. Homodimer.

The catalysed reaction is (2R)-2-phosphoglycerate = (2R)-3-phosphoglycerate. The protein operates within carbohydrate degradation; glycolysis; pyruvate from D-glyceraldehyde 3-phosphate: step 3/5. In terms of biological role, catalyzes the interconversion of 2-phosphoglycerate and 3-phosphoglycerate. The polypeptide is 2,3-bisphosphoglycerate-dependent phosphoglycerate mutase (Xylella fastidiosa (strain 9a5c)).